The primary structure comprises 201 residues: Protein CIMAP1C (201 aa).

An STPGR repeat occupies 171–186 (PAPTMSSRSGHTSPAR). Positions 172–201 (APTMSSRSGHTSPARLLSPWASSTRPTYAR) are disordered. The segment covering 191–201 (WASSTRPTYAR) has biased composition (polar residues).

The protein belongs to the CIMAP family.

The chain is Protein CIMAP1C (CIMAP1C) from Bos taurus (Bovine).